The following is a 249-amino-acid chain: Phosphoadenosine 5'-phosphosulfate reductase (249 aa).

C230 serves as the catalytic Nucleophile; cysteine thiosulfonate intermediate.

The protein belongs to the PAPS reductase family. CysH subfamily.

It is found in the cytoplasm. It carries out the reaction [thioredoxin]-disulfide + sulfite + adenosine 3',5'-bisphosphate + 2 H(+) = [thioredoxin]-dithiol + 3'-phosphoadenylyl sulfate. It participates in sulfur metabolism; hydrogen sulfide biosynthesis; sulfite from sulfate: step 3/3. Functionally, catalyzes the formation of sulfite from phosphoadenosine 5'-phosphosulfate (PAPS) using thioredoxin as an electron donor. The protein is Phosphoadenosine 5'-phosphosulfate reductase of Synechocystis sp. (strain ATCC 27184 / PCC 6803 / Kazusa).